The sequence spans 91 residues: MKTVTMKVTGLVQGVGFRWTTQMIAQDLGITGTVKNNPDGSVSIVAQGEELPLEHFIKKIKASPSVAGHVDHVDLNTVSDAEKFTRFSVVY.

The Acylphosphatase-like domain occupies 3-91 (TVTMKVTGLV…EKFTRFSVVY (89 aa)). Active-site residues include arginine 18 and asparagine 36.

Belongs to the acylphosphatase family.

It carries out the reaction an acyl phosphate + H2O = a carboxylate + phosphate + H(+). This Lactobacillus gasseri (strain ATCC 33323 / DSM 20243 / BCRC 14619 / CIP 102991 / JCM 1131 / KCTC 3163 / NCIMB 11718 / NCTC 13722 / AM63) protein is Acylphosphatase (acyP).